Here is a 490-residue protein sequence, read N- to C-terminus: Cytochrome P450 2W1 (490 aa).

The signal sequence occupies residues 1 to 22; it reads MALLLLLFLGLLGLWGLLCACA. Asn-177 carries an N-linked (GlcNAc...) asparagine glycan. Cys-433 serves as a coordination point for heme.

The protein belongs to the cytochrome P450 family. Requires heme as cofactor. As to expression, very low levels are detected in fetal and adult tissues. Highly expressed in several tumor samples, in particular colon and adrenal tumors.

The protein localises to the endoplasmic reticulum lumen. It is found in the cell membrane. The protein resides in the microsome membrane. It carries out the reaction all-trans-retinoate + reduced [NADPH--hemoprotein reductase] + O2 = all-trans-4-hydroxyretinoate + oxidized [NADPH--hemoprotein reductase] + H2O + H(+). The enzyme catalyses 1-(9Z-octadecenoyl)-sn-glycero-3-phosphocholine + reduced [NADPH--hemoprotein reductase] + O2 = 1-[8-hydroxy-(9Z)-octadecenoyl]-sn-glycero-3-phosphocholine + oxidized [NADPH--hemoprotein reductase] + H2O + H(+). It catalyses the reaction 1-(9Z-octadecenoyl)-sn-glycero-3-phosphocholine + reduced [NADPH--hemoprotein reductase] + O2 = 1-[11-hydroxy-(9Z)-octadecenoyl]-sn-glycero-3-phosphocholine + oxidized [NADPH--hemoprotein reductase] + H2O + H(+). The catalysed reaction is 1-(9Z-octadecenoyl)-sn-glycero-3-phosphocholine + reduced [NADPH--hemoprotein reductase] + O2 = 1-[(9S,10R)-epoxy-octadecanoyl]-sn-glycero-3-phosphocholine + oxidized [NADPH--hemoprotein reductase] + H2O + H(+). It carries out the reaction 1-(9Z-octadecenoyl)-sn-glycero-3-phosphocholine + reduced [NADPH--hemoprotein reductase] + O2 = 1-[(9R,10S)-epoxy-octadecanoyl]-sn-glycero-3-phosphocholine + oxidized [NADPH--hemoprotein reductase] + H2O + H(+). Its function is as follows. A cytochrome P450 monooxygenase that may play a role in retinoid and phospholipid metabolism. Catalyzes the hydroxylation of saturated carbon hydrogen bonds. Hydroxylates all trans-retinoic acid (atRA) to 4-hydroxyretinoate and may regulate atRA clearance. Other retinoids such as all-trans retinol and all-trans retinal are potential endogenous substrates. Catalyzes both epoxidation of double bonds and hydroxylation of carbon hydrogen bonds of the fatty acyl chain of 1-acylphospholipids/2-lysophospholipids. Can metabolize various lysophospholipids classes including lysophosphatidylcholines (LPCs), lysophosphatidylinositols (LPIs), lysophosphatidylserines (LPSs), lysophosphatidylglycerols (LPGs), lysophosphatidylethanolamines (LPEs) and lysophosphatidic acids (LPAs). Has low or no activity toward 2-acylphospholipids/1-lysophospholipids, diacylphospholipids and free fatty acids. May play a role in tumorigenesis by activating procarcinogens such as aflatoxin B1, polycyclic aromatic hydrocarbon dihydrodiols and aromatic amines. Mechanistically, uses molecular oxygen inserting one oxygen atom into a substrate, and reducing the second into a water molecule, with two electrons provided by NADPH via cytochrome P450 reductase (CPR; NADPH-ferrihemoprotein reductase). The chain is Cytochrome P450 2W1 from Homo sapiens (Human).